Here is a 661-residue protein sequence, read N- to C-terminus: Transcription factor ccg-8 (661 aa).

Over residues methionine 1–histidine 11 the composition is skewed to basic residues. Disordered stretches follow at residues methionine 1–asparagine 69, serine 107–proline 243, leucine 255–glutamine 279, and arginine 354–serine 398. 2 stretches are compositionally biased toward low complexity: residues histidine 23–glutamine 43 and serine 107–arginine 140. The segment covering aspartate 173–serine 187 has biased composition (polar residues). Pro residues predominate over residues glutamine 192 to phenylalanine 203. The segment covering serine 357 to glutamine 366 has biased composition (basic and acidic residues).

In terms of biological role, transcription factor that plays a pivotal role in azole adaptive responses by regulating the drug accumulation in the cells. Affects the transcriptional responses to ketoconazole of many genes, including the target gene (erg11), an azole transporter gene (cdr4), a hexose transporter gene (hxt13), a stress response gene (kts-1), two transcription factor genes (named kts-2 and fsd-1/ndt80). Also regulates phospholipid synthesis that is not involved in azole resistance. This is Transcription factor ccg-8 from Neurospora crassa (strain ATCC 24698 / 74-OR23-1A / CBS 708.71 / DSM 1257 / FGSC 987).